The chain runs to 304 residues: Calmodulin-lysine N-methyltransferase (304 aa).

It belongs to the class I-like SAM-binding methyltransferase superfamily. CLNMT methyltransferase family. In terms of assembly, monomer. In terms of tissue distribution, expressed in discreet spatial and tissue-specific patterns including root tips, leaves-tips, floral buds, stamens, hydathodes, stigma, anther, siliques, apical meristems and germinating seeds. Also observed at high levels in the root stele region.

The protein localises to the cytoplasm. It localises to the nucleus. It carries out the reaction [calmodulin]-L-lysine + S-adenosyl-L-methionine = [calmodulin]-N(6)-methyl-L-lysine + S-adenosyl-L-homocysteine + H(+). Catalyzes the trimethylation of calmodulin. Regulates roots development probably by modulating auxin signaling responses. May be involved in gravitropism. Involved in abscisic acid (ABA)-mediated and abiotic stress responses, including salt (NaCl), cold, drought and heat stresses. This Arabidopsis thaliana (Mouse-ear cress) protein is Calmodulin-lysine N-methyltransferase.